The chain runs to 176 residues: Disulfide bond formation protein B (176 aa).

Over 1–14 the chain is Cytoplasmic; that stretch reads MMRSLNRCSKHRAA. The chain crosses the membrane as a helical span at residues 15-31; the sequence is WLLLALTTFSLELVALY. Over 32–49 the chain is Periplasmic; the sequence is FQHVMLLKPCVLCVYQRC. Cysteine 41 and cysteine 44 are disulfide-bonded. A helical transmembrane segment spans residues 50-65; sequence ALYGVVAAGLVGAIAP. The Cytoplasmic segment spans residues 66–71; it reads ATPLRF. Residues 72 to 89 form a helical membrane-spanning segment; that stretch reads SGLAIWLYSAWEGLQLAM. Residues 90 to 144 lie on the Periplasmic side of the membrane; sequence KHTDIQLHPSPFVTCDFFVSFPAWLPLDKWLPSVFSASGDCAVRQWHFLSLEMPQ. A disulfide bridge connects residues cysteine 104 and cysteine 130. Residues 145–163 form a helical membrane-spanning segment; sequence WMIVIFGAYLAVAVLILLA. At 164–176 the chain is on the cytoplasmic side; the sequence is QFFPPRKRDLFSR.

This sequence belongs to the DsbB family.

The protein localises to the cell inner membrane. Functionally, required for disulfide bond formation in some periplasmic proteins. Acts by oxidizing the DsbA protein. This chain is Disulfide bond formation protein B, found in Sodalis glossinidius (strain morsitans).